The sequence spans 215 residues: MKIFIDTANVEEIRKASKLGVLAGVTTNPSLIAKEGRDIKEVIEEICSIVDGPISAEVMALECDEMVREGIELAKIHKNIVIKIPMCEEGLKAVKVLASEGIRTNVTLIFSPLQALLAARAGASFVSPFLGRLDDIGNPGIEIVTQIAEMFALHGIDTEIISASVRNPMHVLDSAMAGSHIATIPYNVILQMVKHPLTDAGMKKFIEDYNKAFNK.

The active-site Schiff-base intermediate with substrate is the Lys83.

It belongs to the transaldolase family. Type 3B subfamily.

It localises to the cytoplasm. It catalyses the reaction D-sedoheptulose 7-phosphate + D-glyceraldehyde 3-phosphate = D-erythrose 4-phosphate + beta-D-fructose 6-phosphate. It functions in the pathway carbohydrate degradation; pentose phosphate pathway; D-glyceraldehyde 3-phosphate and beta-D-fructose 6-phosphate from D-ribose 5-phosphate and D-xylulose 5-phosphate (non-oxidative stage): step 2/3. Functionally, transaldolase is important for the balance of metabolites in the pentose-phosphate pathway. The polypeptide is Probable transaldolase (Clostridium perfringens (strain SM101 / Type A)).